We begin with the raw amino-acid sequence, 149 residues long: Large ribosomal subunit protein uL15 (149 aa).

Composition is skewed to basic residues over residues Met1–His14 and Arg21–Gly30. The tract at residues Met1 to His39 is disordered. 2 short sequence motifs (nuclear localization signal) span residues Lys7–Gly13 and Lys24–Gly30. Residue Lys96 forms a Glycyl lysine isopeptide (Lys-Gly) (interchain with G-Cter in ubiquitin) linkage.

This sequence belongs to the universal ribosomal protein uL15 family. As to quaternary structure, component of the large ribosomal subunit (LSU). Mature yeast ribosomes consist of a small (40S) and a large (60S) subunit. The 40S small subunit contains 1 molecule of ribosomal RNA (18S rRNA) and 33 different proteins (encoded by 57 genes). The large 60S subunit contains 3 rRNA molecules (25S, 5.8S and 5S rRNA) and 46 different proteins (encoded by 81 genes).

It localises to the cytoplasm. Its function is as follows. Component of the ribosome, a large ribonucleoprotein complex responsible for the synthesis of proteins in the cell. The small ribosomal subunit (SSU) binds messenger RNAs (mRNAs) and translates the encoded message by selecting cognate aminoacyl-transfer RNA (tRNA) molecules. The large subunit (LSU) contains the ribosomal catalytic site termed the peptidyl transferase center (PTC), which catalyzes the formation of peptide bonds, thereby polymerizing the amino acids delivered by tRNAs into a polypeptide chain. The nascent polypeptides leave the ribosome through a tunnel in the LSU and interact with protein factors that function in enzymatic processing, targeting, and the membrane insertion of nascent chains at the exit of the ribosomal tunnel. The chain is Large ribosomal subunit protein uL15 from Saccharomyces cerevisiae (strain ATCC 204508 / S288c) (Baker's yeast).